A 485-amino-acid polypeptide reads, in one-letter code: GlcNAc-binding protein A (485 aa).

An N-terminal signal peptide occupies residues 1 to 23 (MKKQPKMTAIALILSGISGLAYG). Residues 24–201 (HGYVSAVENG…SFYNVIDVKF (178 aa)) form the Chitin-binding type-4 domain. In terms of domain architecture, Chitin-binding type-3 spans 437 to 478 (AGTKVLASDGAIYQCKPWPYSGYCQQWTSNATQYQPGTGSHW).

It belongs to the GbpA family.

It localises to the secreted. Its function is as follows. Probably interacts with GlcNAc residues. May promote attachment to both epithelial cell surfaces and chitin. This chain is GlcNAc-binding protein A, found in Vibrio cholerae serotype O1 (strain ATCC 39541 / Classical Ogawa 395 / O395).